The sequence spans 339 residues: DNA-directed RNA polymerase subunit alpha (339 aa).

The tract at residues 1 to 235 (MTIQKNWQEL…DQLNVFVNFE (235 aa)) is alpha N-terminal domain (alpha-NTD). Positions 251 to 339 (FNPAFLKKVD…ELAKRFEDHY (89 aa)) are alpha C-terminal domain (alpha-CTD).

The protein belongs to the RNA polymerase alpha chain family. In terms of assembly, homodimer. The RNAP catalytic core consists of 2 alpha, 1 beta, 1 beta' and 1 omega subunit. When a sigma factor is associated with the core the holoenzyme is formed, which can initiate transcription.

The enzyme catalyses RNA(n) + a ribonucleoside 5'-triphosphate = RNA(n+1) + diphosphate. In terms of biological role, DNA-dependent RNA polymerase catalyzes the transcription of DNA into RNA using the four ribonucleoside triphosphates as substrates. The protein is DNA-directed RNA polymerase subunit alpha of Afipia carboxidovorans (strain ATCC 49405 / DSM 1227 / KCTC 32145 / OM5) (Oligotropha carboxidovorans).